The sequence spans 330 residues: D-lactate dehydrogenase (330 aa).

Residues 156-157 (RI), Asp-176, 206-207 (VP), 233-235 (AAR), and Asp-259 each bind NAD(+). The active site involves Arg-235. Glu-264 is an active-site residue. His-296 (proton donor) is an active-site residue.

It belongs to the D-isomer specific 2-hydroxyacid dehydrogenase family.

It catalyses the reaction (R)-lactate + NAD(+) = pyruvate + NADH + H(+). The chain is D-lactate dehydrogenase (ldhD) from Staphylococcus aureus.